The following is a 354-amino-acid chain: Alternative oxidase, mitochondrial (354 aa).

A mitochondrion-targeting transit peptide spans 1–64 (MNSMSTTGPI…RFISSTPQSQ (64 aa)). The chain crosses the membrane as a helical span at residues 153 to 173 (FVFLESVAGVPGMVGGMLRHL). Residues Glu-157, Glu-196, and His-199 each contribute to the Fe cation site. A helical transmembrane segment spans residues 215–235 (LMVLGAQGVFFNGFFLSYLIS). Glu-247, Glu-302, and His-305 together coordinate Fe cation. The tract at residues 333 to 354 (KPHPGKGIKHLKTTGWEREEVV) is disordered. Residues 335-344 (HPGKGIKHLK) are compositionally biased toward basic residues.

Belongs to the alternative oxidase family. It depends on Fe cation as a cofactor.

The protein localises to the mitochondrion inner membrane. Its function is as follows. Catalyzes cyanide-resistant oxygen consumption. May increase respiration when the cytochrome respiratory pathway is restricted, or in response to low temperatures. In Emericella nidulans (strain FGSC A4 / ATCC 38163 / CBS 112.46 / NRRL 194 / M139) (Aspergillus nidulans), this protein is Alternative oxidase, mitochondrial (alxA).